Here is a 397-residue protein sequence, read N- to C-terminus: Cell division protein DivIB (397 aa).

The Cytoplasmic portion of the chain corresponds to 1 to 138 (MTTKDKGDQK…RIERIHLYRA (138 aa)). Residues 24-37 (QEYLEKKSQEKASE) are compositionally biased toward basic and acidic residues. A disordered region spans residues 24–115 (QEYLEKKSQE…DRTEKFIGQA (92 aa)). Acidic residues predominate over residues 74-103 (ASDDDETNESEESEDVEEPEEENIEESSDV). The helical transmembrane segment at 139-159 (LPVLVISSLLILLSLYFITPL) threads the bilayer. The 72-residue stretch at 160–231 (GSLKNLVVTG…ITFKIQVTEY (72 aa)) folds into the POTRA domain. The Extracellular portion of the chain corresponds to 160–397 (GSLKNLVVTG…PSDVTDETNN (238 aa)). The tract at residues 360–397 (LVQKEEQDQEQEKEESSEETVPGETEAAPSDVTDETNN) is disordered. The segment covering 366-377 (QDQEQEKEESSE) has biased composition (acidic residues).

The protein belongs to the FtsQ/DivIB family. DivIB subfamily.

It is found in the cell membrane. Its function is as follows. Cell division protein that may be involved in stabilizing or promoting the assembly of the division complex. In Streptococcus gordonii (strain Challis / ATCC 35105 / BCRC 15272 / CH1 / DL1 / V288), this protein is Cell division protein DivIB.